The sequence spans 453 residues: Signal transduction histidine-protein kinase ArlS (453 aa).

The next 2 membrane-spanning stretches (helical) occupy residues 14 to 34 (ITTL…IFFL) and 157 to 177 (FVAI…SYIF). The HAMP domain maps to 179–232 (TQLTKPLVTMSNKMIQIRRDGFQNKLELKTNYEETDNLIDTFNDMMYQIEESFN). Residues 240–453 (DASHELRTPL…QYTTFKIIFK (214 aa)) enclose the Histidine kinase domain. Residue His243 is modified to Phosphohistidine; by autocatalysis.

In terms of processing, autophosphorylated.

The protein localises to the cell membrane. The catalysed reaction is ATP + protein L-histidine = ADP + protein N-phospho-L-histidine.. Member of the two-component regulatory system ArlS/ArlR. ArlS probably functions as a sensor protein kinase which is autophosphorylated at a histidine residue and transfers its phosphate group to ArlR. The protein is Signal transduction histidine-protein kinase ArlS (arlS) of Staphylococcus haemolyticus (strain JCSC1435).